The primary structure comprises 134 residues: DNA-binding protein inhibitor ID-2 (134 aa).

Phosphoserine occurs at positions 14 and 25. One can recognise a bHLH domain in the interval 23 to 75 (SRSKTPVDDPMSLLYNMNDCYSKLKELVPSIPQNKKVSKMEILQHVIDYILDL). Residues 106–115 (LNTDISILSL) carry the Nuclear export signal motif.

In terms of assembly, interacts with GATA4 and NKX2-5. Interacts with NR0B2. Interacts with CLOCK and BMAL1. Interacts with IFI204. Interacts with NEDD9/HEF1. Interacts with ASB4; this interaction promotes ID2 proteasomal degradation. In terms of processing, ubiquitinated in a ASB4-depedent manner, leading to proteasomal degradation. Phosphorylated in vitro by CDK1, PKA and PKC.

Its subcellular location is the cytoplasm. The protein resides in the nucleus. In terms of biological role, transcriptional regulator (lacking a basic DNA binding domain) which negatively regulates the basic helix-loop-helix (bHLH) transcription factors by forming heterodimers and inhibiting their DNA binding and transcriptional activity. Implicated in regulating a variety of cellular processes, including cellular growth, senescence, differentiation, apoptosis, angiogenesis, and neoplastic transformation. Inhibits skeletal muscle and cardiac myocyte differentiation. Regulates the circadian clock by repressing the transcriptional activator activity of the CLOCK-BMAL1 heterodimer. Restricts the CLOCK and BMAL1 localization to the cytoplasm. Plays a role in both the input and output pathways of the circadian clock: in the input component, is involved in modulating the magnitude of photic entrainment and in the output component, contributes to the regulation of a variety of liver clock-controlled genes involved in lipid metabolism. In Sus scrofa (Pig), this protein is DNA-binding protein inhibitor ID-2 (ID2).